A 159-amino-acid polypeptide reads, in one-letter code: Protein phosphatase 1 regulatory subunit 17 (159 aa).

Disordered stretches follow at residues methionine 1–proline 79 and arginine 98–histidine 127. Basic and acidic residues-rich tracts occupy residues serine 62–proline 73 and serine 111–proline 124. 2 positions are modified to phosphothreonine; by PKG/PRKG1: threonine 72 and threonine 123.

Substrate for cGMP-dependent protein kinase. Phosphorylation of Thr-72 and Thr-123 is required for its phosphatase activity. Phosphorylated by PRKG1 isoform alpha. Expressed in Purkinje cells of the cerebellum, hippocampus, pons, medulla and eye.

Inhibits phosphatase activities of protein phosphatase 1 (PP1) and protein phosphatase 2A (PP2A) complexes. In Mus musculus (Mouse), this protein is Protein phosphatase 1 regulatory subunit 17 (Ppp1r17).